The primary structure comprises 772 residues: Rho guanine nucleotide exchange factor 6 (772 aa).

The Calponin-homology (CH) domain maps to 1–111; sequence MNPEERVVTW…TLLAVNKATE (111 aa). The interval 115–158 is disordered; it reads SERPCGRSSSLSATTSSQTNPQAAVPSTTPEQQSEEKAAEMTEN. Low complexity predominate over residues 122-133; the sequence is SSSLSATTSSQT. Serine 126 is modified (phosphoserine). Threonine 133 carries the phosphothreonine modification. Positions 134 to 146 are enriched in polar residues; it reads NPQAAVPSTTPEQ. Residues 160–219 form the SH3 domain; the sequence is SHQLIVKARFNFKQTNEDELSVCKGDIIYVTRVEEGGWWEGTLNGRTGWFPSNYVREIKP. The residue at position 225 (serine 225) is a Phosphoserine. The region spanning 241-421 is the DH domain; sequence YYTVVLQNIL…KSLMGQCQDL (181 aa). The PH domain maps to 443-548; that stretch reads DIKTLGNVIF…WMEQLNRLTK (106 aa). Serine 488 bears the Phosphoserine mark. Positions 557-573 are enriched in low complexity; sequence SKTSSSSCSTHSSFSST. The tract at residues 557–581 is disordered; the sequence is SKTSSSSCSTHSSFSSTGQPRGPLE. Serine 640 and serine 680 each carry phosphoserine.

As to quaternary structure, interacts with PAK kinases through the SH3 domain. Interacts with GIT1. Interacts with PARVB. Component of cytoplasmic complexes, which also contain PXN, GIT1 and PAK1. Interacts with BIN2. Identified in a complex with BIN2 and GIT2. Interacts with PARVG; the guanine nucleotide exchange factor activity of ARHGEF6 is essential for PARVG-induced enhancement of cell spreading.

The protein localises to the cell projection. It is found in the lamellipodium. Functionally, acts as a RAC1 guanine nucleotide exchange factor (GEF). This Rattus norvegicus (Rat) protein is Rho guanine nucleotide exchange factor 6 (Arhgef6).